The primary structure comprises 323 residues: Synaptonemal complex central element protein 1 (323 aa).

Residues 1–10 (MAGRPGSSNA) are compositionally biased toward polar residues. 2 disordered regions span residues 1–31 (MAGR…SSQK) and 294–323 (KQEE…PSTK). Basic and acidic residues-rich tracts occupy residues 20-31 (DEARGQAESSQK) and 313-323 (SEEKDQEPSTK). Residues 25–290 (QAESSQKIED…EKLGVQVLAQ (266 aa)) adopt a coiled-coil conformation.

It belongs to the SYCE family. Homodimer. Found in a complex with SYCP1 and SYCE2. Interacts with SYCP1, SYCE2 and SYCE3. Interacts with SIX6OS1.

The protein resides in the nucleus. It localises to the chromosome. Major component of the transverse central element of synaptonemal complexes (SCS), formed between homologous chromosomes during meiotic prophase. Requires SYCP1 in order to be incorporated into the central element. May have a role in the synaptonemal complex assembly, stabilization and recombination. The polypeptide is Synaptonemal complex central element protein 1 (SYCE1) (Bos taurus (Bovine)).